A 335-amino-acid polypeptide reads, in one-letter code: Acetyl-coenzyme A carboxylase carboxyl transferase subunit alpha (335 aa).

The region spanning 40–294 (QLETLATRRR…KEAIEKHLDT (255 aa)) is the CoA carboxyltransferase C-terminal domain.

Belongs to the AccA family. As to quaternary structure, acetyl-CoA carboxylase is a heterohexamer composed of biotin carboxyl carrier protein (AccB), biotin carboxylase (AccC) and two subunits each of ACCase subunit alpha (AccA) and ACCase subunit beta (AccD).

Its subcellular location is the cytoplasm. The catalysed reaction is N(6)-carboxybiotinyl-L-lysyl-[protein] + acetyl-CoA = N(6)-biotinyl-L-lysyl-[protein] + malonyl-CoA. Its pathway is lipid metabolism; malonyl-CoA biosynthesis; malonyl-CoA from acetyl-CoA: step 1/1. Component of the acetyl coenzyme A carboxylase (ACC) complex. First, biotin carboxylase catalyzes the carboxylation of biotin on its carrier protein (BCCP) and then the CO(2) group is transferred by the carboxyltransferase to acetyl-CoA to form malonyl-CoA. This chain is Acetyl-coenzyme A carboxylase carboxyl transferase subunit alpha, found in Prochlorococcus marinus (strain MIT 9312).